The sequence spans 205 residues: Holliday junction branch migration complex subunit RuvA (205 aa).

A domain I region spans residues 1–64 (MIGRLRGLLV…EDAQLLYGFI (64 aa)). Positions 65-143 (TKQERALFRL…SLMEASAGSE (79 aa)) are domain II. The tract at residues 144–156 (REFMLKSNYTPAP) is flexible linker. Positions 157–205 (VINTAEEDAIAALLSLGYKPAQASKAVSAVYQDGMDSETLIKSSLKSML) are domain III.

Belongs to the RuvA family. In terms of assembly, homotetramer. Forms an RuvA(8)-RuvB(12)-Holliday junction (HJ) complex. HJ DNA is sandwiched between 2 RuvA tetramers; dsDNA enters through RuvA and exits via RuvB. An RuvB hexamer assembles on each DNA strand where it exits the tetramer. Each RuvB hexamer is contacted by two RuvA subunits (via domain III) on 2 adjacent RuvB subunits; this complex drives branch migration. In the full resolvosome a probable DNA-RuvA(4)-RuvB(12)-RuvC(2) complex forms which resolves the HJ.

It is found in the cytoplasm. Its function is as follows. The RuvA-RuvB-RuvC complex processes Holliday junction (HJ) DNA during genetic recombination and DNA repair, while the RuvA-RuvB complex plays an important role in the rescue of blocked DNA replication forks via replication fork reversal (RFR). RuvA specifically binds to HJ cruciform DNA, conferring on it an open structure. The RuvB hexamer acts as an ATP-dependent pump, pulling dsDNA into and through the RuvAB complex. HJ branch migration allows RuvC to scan DNA until it finds its consensus sequence, where it cleaves and resolves the cruciform DNA. The chain is Holliday junction branch migration complex subunit RuvA from Shewanella sediminis (strain HAW-EB3).